Reading from the N-terminus, the 752-residue chain is Ribonucleases P/MRP protein subunit popl-1 (752 aa).

The disordered stretch occupies residues 638 to 663; that stretch reads KTTKRKRVNRKKRESKKRRKIEQEKR. A compositionally biased stretch (basic residues) spans 640–657; the sequence is TKRKRVNRKKRESKKRRK.

Component of nuclear RNase P and RNase MRP ribonucleoproteins. Several subunits of RNase P are also part of the RNase MRP complex.

The protein localises to the nucleus. It localises to the nucleolus. The catalysed reaction is Endonucleolytic cleavage of RNA, removing 5'-extranucleotides from tRNA precursor.. Functionally, component of ribonuclease P, a ribonucleoprotein complex that generates mature tRNA molecules by cleaving their 5'-ends. Also a component of the MRP ribonuclease complex, which cleaves pre-rRNA sequences. The sequence is that of Ribonucleases P/MRP protein subunit popl-1 from Caenorhabditis elegans.